We begin with the raw amino-acid sequence, 55 residues long: Large ribosomal subunit protein bL33 (55 aa).

It belongs to the bacterial ribosomal protein bL33 family.

This chain is Large ribosomal subunit protein bL33, found in Ruegeria pomeroyi (strain ATCC 700808 / DSM 15171 / DSS-3) (Silicibacter pomeroyi).